The chain runs to 362 residues: Histidinol-phosphate aminotransferase 1 (362 aa).

The residue at position 226 (Lys226) is an N6-(pyridoxal phosphate)lysine.

Belongs to the class-II pyridoxal-phosphate-dependent aminotransferase family. Histidinol-phosphate aminotransferase subfamily. Homodimer. Requires pyridoxal 5'-phosphate as cofactor.

It catalyses the reaction L-histidinol phosphate + 2-oxoglutarate = 3-(imidazol-4-yl)-2-oxopropyl phosphate + L-glutamate. It participates in amino-acid biosynthesis; L-histidine biosynthesis; L-histidine from 5-phospho-alpha-D-ribose 1-diphosphate: step 7/9. The chain is Histidinol-phosphate aminotransferase 1 from Dechloromonas aromatica (strain RCB).